The chain runs to 318 residues: MFPSPALTHTPFSVKDILNLEQQQRSLAAGDLSARLEATLAPASCMLAAFKPDGYSGPEAAAPGLAELRAELGPAPSPPKCSPAFPTAPTFYPRAYGDPDPAKDPRADKKELCALQKAVELDKAETDGAERRRPRRRRKPRVLFSQAQVYELERRFKQQRYLSPAERDQLASVLKLTSTQVKIWFQNRRYKCKRQRQDQTLELLGPPPPPARRIAVPVLVRDGKPCLGDSAAYAPAYGLGLNAYGYNAYPYPGYGGAACSPAYSCAAYPAAPPAAHAPAASANSNFVNFGVGDLNTVQSPGMPQGNSGVSTLHGIRAW.

The segment at residues 137–196 is a DNA-binding region (homeobox); the sequence is RRKPRVLFSQAQVYELERRFKQQRYLSPAERDQLASVLKLTSTQVKIWFQNRRYKCKRQR.

The protein belongs to the NK-2 homeobox family. As to quaternary structure, homodimer (via the homeobox); binds DNA as homodimer. Interacts (via the homeobox) with TBX5 (via the T-box); this complex binds DNA. Interacts with HIPK1 and HIPK2, but not HIPK3. Interacts with the C-terminal zinc finger of GATA4 through its homeobox domain. Also interacts with JARID2 which represses its ability to activate transcription of ANF. Interacts with FBLIM1. Interacts with TBX18. Interacts with histone methyltransferase NSD2 (via HMG box). Interacts with NEDD9. Interacts with TBX1.

It localises to the nucleus. Its function is as follows. Transcription factor required for the development of the heart and the spleen. During heart development, acts as a transcriptional activator of NPPA/ANF in cooperation with GATA4. May cooperate with TBX2 to negatively modulate expression of NPPA/ANF in the atrioventricular canal. Binds to the core DNA motif of NPPA promoter. Together with PBX1, required for spleen development through a mechanism that involves CDKN2B repression. Positively regulates transcription of genes such as COL3A1 and MMP2, resulting in increased pulmonary endothelial fibrosis in response to hypoxia. This is Homeobox protein Nkx-2.5 (Nkx2-5) from Rattus norvegicus (Rat).